We begin with the raw amino-acid sequence, 1334 residues long: CRISPR-associated endonuclease Cas9 (1334 aa).

Residue aspartate 10 is the For RuvC-like nuclease domain of the active site. Mn(2+) is bound by residues aspartate 10, glutamate 765, and glutamate 769. The 152-residue stretch at threonine 773–leucine 924 folds into the HNH Cas9-type domain. The active-site Proton acceptor for HNH nuclease domain is the histidine 843. Histidine 986 contacts Mn(2+).

It belongs to the CRISPR-associated protein Cas9 family. Subtype II-A subfamily. In terms of assembly, monomer. Binds crRNA and tracrRNA. It depends on Mg(2+) as a cofactor.

CRISPR (clustered regularly interspaced short palindromic repeat) is an adaptive immune system that provides protection against mobile genetic elements (viruses, transposable elements and conjugative plasmids). CRISPR clusters contain spacers, sequences complementary to antecedent mobile elements, and target invading nucleic acids. CRISPR clusters are transcribed and processed into CRISPR RNA (crRNA). In type II CRISPR systems correct processing of pre-crRNA requires a trans-encoded small RNA (tracrRNA), endogenous ribonuclease 3 (rnc) and this protein. The tracrRNA serves as a guide for ribonuclease 3-aided processing of pre-crRNA. Subsequently Cas9/crRNA/tracrRNA endonucleolytically cleaves linear or circular dsDNA target complementary to the spacer; Cas9 is inactive in the absence of the 2 guide RNAs (gRNA). Cas9 recognizes the protospacer adjacent motif (PAM) in the CRISPR repeat sequences to help distinguish self versus nonself, as targets within the bacterial CRISPR locus do not have PAMs. PAM recognition is also required for catalytic activity. This is CRISPR-associated endonuclease Cas9 from Listeria innocua serovar 6a (strain ATCC BAA-680 / CLIP 11262).